A 351-amino-acid polypeptide reads, in one-letter code: Putative aryl-alcohol dehydrogenase C977.14c (351 aa).

Residue serine 113 is modified to Phosphoserine.

This sequence belongs to the aldo/keto reductase family. Aldo/keto reductase 2 subfamily.

It is found in the cytoplasm. It localises to the nucleus. The protein is Putative aryl-alcohol dehydrogenase C977.14c of Schizosaccharomyces pombe (strain 972 / ATCC 24843) (Fission yeast).